The sequence spans 127 residues: Large ribosomal subunit protein eL32 (127 aa).

Residues 38–48 (WRRPKGIDSKM) show a composition bias toward basic and acidic residues. Residues 38–66 (WRRPKGIDSKMRLKKKGKPRSPSIGWSSP) are disordered.

Belongs to the eukaryotic ribosomal protein eL32 family.

This chain is Large ribosomal subunit protein eL32, found in Thermococcus gammatolerans (strain DSM 15229 / JCM 11827 / EJ3).